Reading from the N-terminus, the 528-residue chain is D-3-phosphoglycerate dehydrogenase (528 aa).

NAD(+) contacts are provided by residues 151–152, Asp171, 230–232, and Asp256; these read RI and AAR. Residue Arg232 is part of the active site. Glu261 is an active-site residue. Residue His279 is the Proton donor of the active site. 279–282 lines the NAD(+) pocket; that stretch reads HLGA. An ACT domain is found at 455 to 528; it reads NLVIRYVDQP…ANKLEVVNLS (74 aa).

This sequence belongs to the D-isomer specific 2-hydroxyacid dehydrogenase family.

It carries out the reaction (2R)-3-phosphoglycerate + NAD(+) = 3-phosphooxypyruvate + NADH + H(+). It catalyses the reaction (R)-2-hydroxyglutarate + NAD(+) = 2-oxoglutarate + NADH + H(+). It functions in the pathway amino-acid biosynthesis; L-serine biosynthesis; L-serine from 3-phospho-D-glycerate: step 1/3. Catalyzes the reversible oxidation of 3-phospho-D-glycerate to 3-phosphonooxypyruvate, the first step of the phosphorylated L-serine biosynthesis pathway. Also catalyzes the reversible oxidation of 2-hydroxyglutarate to 2-oxoglutarate. The protein is D-3-phosphoglycerate dehydrogenase (serA) of Mycobacterium leprae (strain TN).